We begin with the raw amino-acid sequence, 304 residues long: Calcium release-activated calcium channel protein 1 (304 aa).

The span at 1-11 (MHPEPAPPPSH) shows a compositional bias: pro residues. The disordered stretch occupies residues 1-50 (MHPEPAPPPSHSNPELPVSGGSSTSGSRRSRRRSGDGEPSGAPPLPPPPP). The Cytoplasmic portion of the chain corresponds to 1-89 (MHPEPAPPPS…KLYLSRAKLK (89 aa)). The tract at residues 3-49 (PEPAPPPSHSNPELPVSGGSSTSGSRRSRRRSGDGEPSGAPPLPPPP) is required for generation of inwardly rectifying CRAC currents. The segment covering 12-27 (SNPELPVSGGSSTSGS) has biased composition (low complexity). The interval 39–61 (PSGAPPLPPPPPAVSYPDWIGQS) is AKAP5 association region. Positions 41 to 50 (GAPPLPPPPP) are enriched in pro residues. Residues 72 to 92 (SMQALSWRKLYLSRAKLKASS) form an interaction with STIM1 region. A helical transmembrane segment spans residues 90 to 107 (ASSRTSALLSGFAMVAMV). Residues 108–121 (EVQLDTDHDYPPGL) lie on the Extracellular side of the membrane. The chain crosses the membrane as a helical span at residues 122–142 (LIVFSACTTVLVAVHLFALMI). Residues 143-175 (STCILPNIEAVSNVHNLNSVKESPHERMHRHIE) are Cytoplasmic-facing. The chain crosses the membrane as a helical span at residues 176-196 (LAWAFSTVIGTLLFLAEVVLL). Residues 197-237 (CWVKFLPLKRQAGQPSPTKPPAESVIVANHSDSSGITPGEA) lie on the Extracellular side of the membrane. Asn225 carries N-linked (GlcNAc...) asparagine glycosylation. The helical transmembrane segment at 238–258 (AAIASTAIMVPCGLVFIVFAV) threads the bilayer. The Cytoplasmic portion of the chain corresponds to 259-304 (HFYRSLVSHKTDRQFQELNELAEFARLQDQLDHRGDHSLTPGTHYA). The tract at residues 275-295 (ELNELAEFARLQDQLDHRGDH) is interaction with STIM1. The residue at position 298 (Thr298) is a Phosphothreonine.

This sequence belongs to the Orai family. In terms of assembly, oligomerizes in homomeric and heteromeric ORAI complexes. Native CRAC channels most likely consist of hexameric ORAI heteromers, implying that diverse ORAI1, ORAI2 and ORAI3 subunit combinations with distinct biophysical properties can operate in a cell-type specific way. ARC channels are heteropentamers consisting of three ORAI1 and two ORAI3 subunits. Interacts with STIM1 and STIM2; this regulates channel activity. Interacts with CALM; this may displace STIM1 and STIM2 and might thereby modulate channel activity. Interacts (via N-terminus) with AKAP5 upon store depletion. Interacts with CRACR2A/EFCAB4B; the interaction is direct and takes place in absence of Ca(2+). Forms a complex with CRACR2A/EFCAB4B and STIM1 at low concentration of Ca(2+), the complex dissociates at elevated Ca(2+) concentrations. Interacts with ASPH (isoform 8). Interacts with SLC35G1. Interacts with UBQLN1. Interacts with ADCY8; interaction is calcium store depletion independent; interaction occurs in membrane raft; interaction increases markedly after store depletion; positively regulates SOCE-induced adenylate cyclase activity; contributes to the targeting of ADCY8 to discrete regions of the plasma membrane that are shielded from other calcium events. Interacts with EFHB; the interaction takes place upon Ca(2+)-store depletion. Interacts (via N- and C-termini) with ATP2C2 (via N-terminus); this interaction regulates Ca(2+) influx at the plasma membrane. Interacts with TSPAN18; this interaction regulates ORAI1 exit from the endoplasmic (ER), and/or Golgi, and trafficking to the cell surface. In terms of processing, N-glycosylated. N-glycosylation inhibits channel activity in T cells. Ubiquitinated. Post-translationally, cys-195 is oxidated, leading to inactivation of channel activity. Expressed in lactating mammary epithelium (at protein level).

Its subcellular location is the cell membrane. The protein localises to the basolateral cell membrane. The enzyme catalyses Ca(2+)(in) = Ca(2+)(out). With respect to regulation, oxidation at Cys-197 leads to inactivation of channel activity. Its function is as follows. Pore-forming subunit of two major inward rectifying Ca(2+) channels at the plasma membrane: Ca(2+) release-activated Ca(2+) (CRAC) channels and arachidonate-regulated Ca(2+)-selective (ARC) channels. Assembles with ORAI2 and ORAI3 to form hexameric CRAC channels that mediate Ca(2+) influx upon depletion of endoplasmic reticulum Ca(2+) store and channel activation by Ca(2+) sensor STIM1, a process known as store-operated Ca(2+) entry (SOCE). Various pore subunit combinations may account for distinct CRAC channel spatiotemporal and cell-type specific dynamics. ORAI1 mainly contributes to the generation of Ca(2+) plateaus involved in sustained Ca(2+) entry and is dispensable for cytosolic Ca(2+) oscillations, whereas ORAI2 and ORAI3 generate oscillatory patterns. CRAC channels assemble in Ca(2+) signaling microdomains where Ca(2+) influx is coupled to calmodulin and calcineurin signaling and activation of NFAT transcription factors recruited to ORAI1 via AKAP5. Activates NFATC2/NFAT1 and NFATC3/NFAT4-mediated transcriptional responses. CRAC channels are the main pathway for Ca(2+) influx in T cells and promote the immune response to pathogens by activating NFAT-dependent cytokine and chemokine transcription. Assembles with ORAI3 to form channels that mediate store-independent Ca(2+) influx in response to inflammatory metabolites arachidonate or its derivative leukotriene C4, termed ARC and LRC channels respectively. Plays a prominent role in Ca(2+) influx at the basolateral membrane of mammary epithelial cells independently of the Ca(2+) content of endoplasmic reticulum or Golgi stores. May mediate transepithelial transport of large quantities of Ca(2+) for milk secretion. The polypeptide is Calcium release-activated calcium channel protein 1 (Orai1) (Mus musculus (Mouse)).